The following is a 357-amino-acid chain: Meiotically up-regulated gene 135 protein (357 aa).

Belongs to the UPF0612 family.

It localises to the nucleus. In terms of biological role, has a role in meiosis. This chain is Meiotically up-regulated gene 135 protein (mug135), found in Schizosaccharomyces pombe (strain 972 / ATCC 24843) (Fission yeast).